The chain runs to 30 residues: Photosystem I reaction center subunit XII (30 aa).

The helical transmembrane segment at 6 to 26 (VFTILAIALVPAVMALLLGSA) threads the bilayer.

This sequence belongs to the PsaM family.

The protein resides in the cellular thylakoid membrane. The polypeptide is Photosystem I reaction center subunit XII (Synechococcus sp. (strain JA-2-3B'a(2-13)) (Cyanobacteria bacterium Yellowstone B-Prime)).